Consider the following 122-residue polypeptide: MIVGIGVDIVELDRMARSMKQPRFLKRLLTDAEYELSQQYPLPRQIEFVSGRFAAKEAYAKAIGTGIAHGLSWRHIEILPDETGRPVMTAPFVGKIHVSISHSQTYAIAQVILEEEGHHVSS.

Asp8 and Glu57 together coordinate Mg(2+).

Belongs to the P-Pant transferase superfamily. AcpS family. The cofactor is Mg(2+).

The protein resides in the cytoplasm. The enzyme catalyses apo-[ACP] + CoA = holo-[ACP] + adenosine 3',5'-bisphosphate + H(+). Functionally, transfers the 4'-phosphopantetheine moiety from coenzyme A to a Ser of acyl-carrier-protein. The sequence is that of Holo-[acyl-carrier-protein] synthase from Exiguobacterium sp. (strain ATCC BAA-1283 / AT1b).